The primary structure comprises 474 residues: ATP synthase subunit beta (474 aa).

151–158 (GGAGVGKT) provides a ligand contact to ATP.

This sequence belongs to the ATPase alpha/beta chains family. F-type ATPases have 2 components, CF(1) - the catalytic core - and CF(0) - the membrane proton channel. CF(1) has five subunits: alpha(3), beta(3), gamma(1), delta(1), epsilon(1). CF(0) has four main subunits: a(1), b(1), b'(1) and c(9-12).

The protein resides in the cell inner membrane. It carries out the reaction ATP + H2O + 4 H(+)(in) = ADP + phosphate + 5 H(+)(out). In terms of biological role, produces ATP from ADP in the presence of a proton gradient across the membrane. The catalytic sites are hosted primarily by the beta subunits. The polypeptide is ATP synthase subunit beta (Jannaschia sp. (strain CCS1)).